Consider the following 303-residue polypeptide: tRNA pseudouridine synthase B (303 aa).

Catalysis depends on Asp-47, which acts as the Nucleophile.

The protein belongs to the pseudouridine synthase TruB family. Type 1 subfamily.

It carries out the reaction uridine(55) in tRNA = pseudouridine(55) in tRNA. In terms of biological role, responsible for synthesis of pseudouridine from uracil-55 in the psi GC loop of transfer RNAs. This Legionella pneumophila (strain Paris) protein is tRNA pseudouridine synthase B.